The chain runs to 274 residues: Ribosomal RNA small subunit methyltransferase A (274 aa).

The S-adenosyl-L-methionine site is built by His15, Leu17, Gly42, Glu64, Asp89, and Asn109.

It belongs to the class I-like SAM-binding methyltransferase superfamily. rRNA adenine N(6)-methyltransferase family. RsmA subfamily.

It is found in the cytoplasm. It catalyses the reaction adenosine(1518)/adenosine(1519) in 16S rRNA + 4 S-adenosyl-L-methionine = N(6)-dimethyladenosine(1518)/N(6)-dimethyladenosine(1519) in 16S rRNA + 4 S-adenosyl-L-homocysteine + 4 H(+). Functionally, specifically dimethylates two adjacent adenosines (A1518 and A1519) in the loop of a conserved hairpin near the 3'-end of 16S rRNA in the 30S particle. May play a critical role in biogenesis of 30S subunits. In Synechococcus sp. (strain CC9605), this protein is Ribosomal RNA small subunit methyltransferase A.